We begin with the raw amino-acid sequence, 246 residues long: Phosphomannomutase 2 (246 aa).

N-acetylalanine is present on alanine 2. Aspartate 12 acts as the Nucleophile in catalysis. Mg(2+)-binding residues include aspartate 12 and aspartate 14. The active-site Proton donor/acceptor is aspartate 14. Alpha-D-mannose 1-phosphate contacts are provided by arginine 21, arginine 123, arginine 134, and arginine 141. Lysine 149 is subject to N6-acetyllysine. Alpha-D-mannose 1-phosphate contacts are provided by serine 179 and aspartate 181. The Mg(2+) site is built by aspartate 209, phenylalanine 221, aspartate 223, and threonine 226.

The protein belongs to the eukaryotic PMM family. In terms of assembly, homodimer.

The protein localises to the cytoplasm. It catalyses the reaction alpha-D-mannose 1-phosphate = D-mannose 6-phosphate. The protein operates within nucleotide-sugar biosynthesis; GDP-alpha-D-mannose biosynthesis; alpha-D-mannose 1-phosphate from D-fructose 6-phosphate: step 2/2. Functionally, involved in the synthesis of the GDP-mannose and dolichol-phosphate-mannose required for a number of critical mannosyl transfer reactions. The polypeptide is Phosphomannomutase 2 (PMM2) (Homo sapiens (Human)).